The sequence spans 126 residues: Protein ApaG (126 aa).

An ApaG domain is found at 2-126 (SDPRYQVDVS…FRLAVPGALH (125 aa)).

The chain is Protein ApaG from Pseudomonas fluorescens (strain Pf0-1).